A 331-amino-acid chain; its full sequence is Glycerol-3-phosphate dehydrogenase [NAD(P)+] (331 aa).

Trp11, Arg30, and Lys105 together coordinate NADPH. The sn-glycerol 3-phosphate site is built by Lys105, Gly134, and Ser136. Residue Ala138 coordinates NADPH. The sn-glycerol 3-phosphate site is built by Lys189, Asp242, Ser252, Arg253, and Asn254. Lys189 (proton acceptor) is an active-site residue. NADPH is bound at residue Arg253. Residues Val277 and Glu279 each coordinate NADPH.

It belongs to the NAD-dependent glycerol-3-phosphate dehydrogenase family.

Its subcellular location is the cytoplasm. The enzyme catalyses sn-glycerol 3-phosphate + NAD(+) = dihydroxyacetone phosphate + NADH + H(+). The catalysed reaction is sn-glycerol 3-phosphate + NADP(+) = dihydroxyacetone phosphate + NADPH + H(+). It participates in membrane lipid metabolism; glycerophospholipid metabolism. Catalyzes the reduction of the glycolytic intermediate dihydroxyacetone phosphate (DHAP) to sn-glycerol 3-phosphate (G3P), the key precursor for phospholipid synthesis. The protein is Glycerol-3-phosphate dehydrogenase [NAD(P)+] of Herminiimonas arsenicoxydans.